A 417-amino-acid chain; its full sequence is Multifunctional CCA protein (417 aa).

ATP contacts are provided by glycine 8 and arginine 11. 2 residues coordinate CTP: glycine 8 and arginine 11. Mg(2+) contacts are provided by aspartate 21 and aspartate 23. Residues arginine 91, arginine 137, and arginine 140 each contribute to the ATP site. CTP-binding residues include arginine 91, arginine 137, and arginine 140. The region spanning 225–326 is the HD domain; it reads SGIHTLMTLQ…LNVLKKTDAF (102 aa).

Belongs to the tRNA nucleotidyltransferase/poly(A) polymerase family. Bacterial CCA-adding enzyme type 1 subfamily. As to quaternary structure, monomer. Can also form homodimers and oligomers. Mg(2+) serves as cofactor. The cofactor is Ni(2+).

It catalyses the reaction a tRNA precursor + 2 CTP + ATP = a tRNA with a 3' CCA end + 3 diphosphate. The enzyme catalyses a tRNA with a 3' CCA end + 2 CTP + ATP = a tRNA with a 3' CCACCA end + 3 diphosphate. In terms of biological role, catalyzes the addition and repair of the essential 3'-terminal CCA sequence in tRNAs without using a nucleic acid template. Adds these three nucleotides in the order of C, C, and A to the tRNA nucleotide-73, using CTP and ATP as substrates and producing inorganic pyrophosphate. tRNA 3'-terminal CCA addition is required both for tRNA processing and repair. Also involved in tRNA surveillance by mediating tandem CCA addition to generate a CCACCA at the 3' terminus of unstable tRNAs. While stable tRNAs receive only 3'-terminal CCA, unstable tRNAs are marked with CCACCA and rapidly degraded. The sequence is that of Multifunctional CCA protein from Neisseria meningitidis serogroup B (strain ATCC BAA-335 / MC58).